A 562-amino-acid polypeptide reads, in one-letter code: Gut esterase 1 (562 aa).

A signal peptide spans 1–16 (MRVLLASLLIFGACWA). Residues cysteine 75 and cysteine 93 are joined by a disulfide bond. The active-site Acyl-ester intermediate is the serine 199. A disulfide bridge connects residues cysteine 251 and cysteine 259. Catalysis depends on charge relay system residues glutamate 320 and histidine 451. Positions 559–562 (KDEL) match the Prevents secretion from ER motif.

This sequence belongs to the type-B carboxylesterase/lipase family. In terms of tissue distribution, expressed only in the intestine.

It is found in the endoplasmic reticulum lumen. The enzyme catalyses a carboxylic ester + H2O = an alcohol + a carboxylate + H(+). The protein is Gut esterase 1 (ges-1) of Caenorhabditis briggsae.